Consider the following 434-residue polypeptide: Serine--tRNA ligase (434 aa).

Residue 237 to 239 participates in L-serine binding; that stretch reads TAE. 268-270 provides a ligand contact to ATP; it reads RAE. Residue E291 participates in L-serine binding. Residue 358–361 participates in ATP binding; that stretch reads EISS. Position 393 (S393) interacts with L-serine.

Belongs to the class-II aminoacyl-tRNA synthetase family. Type-1 seryl-tRNA synthetase subfamily. In terms of assembly, homodimer. The tRNA molecule binds across the dimer.

The protein resides in the cytoplasm. It catalyses the reaction tRNA(Ser) + L-serine + ATP = L-seryl-tRNA(Ser) + AMP + diphosphate + H(+). The enzyme catalyses tRNA(Sec) + L-serine + ATP = L-seryl-tRNA(Sec) + AMP + diphosphate + H(+). It functions in the pathway aminoacyl-tRNA biosynthesis; selenocysteinyl-tRNA(Sec) biosynthesis; L-seryl-tRNA(Sec) from L-serine and tRNA(Sec): step 1/1. Functionally, catalyzes the attachment of serine to tRNA(Ser). Is also able to aminoacylate tRNA(Sec) with serine, to form the misacylated tRNA L-seryl-tRNA(Sec), which will be further converted into selenocysteinyl-tRNA(Sec). This is Serine--tRNA ligase from Rhodopseudomonas palustris (strain ATCC BAA-98 / CGA009).